Here is a 485-residue protein sequence, read N- to C-terminus: 3-isopropylmalate dehydratase large subunit (485 aa).

[4Fe-4S] cluster contacts are provided by Cys-367, Cys-427, and Cys-430. Positions 439-451 (SPGQRAASTSNRN) are enriched in polar residues. The segment at 439-462 (SPGQRAASTSNRNFEGRQGKGGRT) is disordered.

Belongs to the aconitase/IPM isomerase family. LeuC type 1 subfamily. In terms of assembly, heterodimer of LeuC and LeuD. [4Fe-4S] cluster serves as cofactor.

The enzyme catalyses (2R,3S)-3-isopropylmalate = (2S)-2-isopropylmalate. The protein operates within amino-acid biosynthesis; L-leucine biosynthesis; L-leucine from 3-methyl-2-oxobutanoate: step 2/4. Functionally, catalyzes the isomerization between 2-isopropylmalate and 3-isopropylmalate, via the formation of 2-isopropylmaleate. This is 3-isopropylmalate dehydratase large subunit from Actinoplanes teichomyceticus.